A 107-amino-acid polypeptide reads, in one-letter code: uncharacterized protein (107 aa).

The HTH cro/C1-type domain maps to 13-68; sequence LQEEFLEPLSLKISDLAQILDVHRNTASNIVNNSSRITLEMAVKLAKVFDTTPEFW. Residues 24 to 43 constitute a DNA-binding region (H-T-H motif); sequence KISDLAQILDVHRNTASNIV.

Belongs to the VapA/VapI family.

This is an uncharacterized protein from Haemophilus influenzae (strain ATCC 51907 / DSM 11121 / KW20 / Rd).